Reading from the N-terminus, the 503-residue chain is Protein DETOXIFICATION 36 (503 aa).

12 helical membrane-spanning segments follow: residues 54 to 74 (LFHL…MSML), 87 to 107 (LAAA…LMLG), 137 to 157 (IVLV…KPLL), 166 to 186 (VASV…AYAV), 203 to 223 (SAYI…LSVF), 225 to 245 (FGWG…IIVL), 271 to 293 (GLWD…SWYS), 313 to 333 (LAIC…FNAA), 355 to 375 (AVTT…ILSW), 399 to 419 (FLAI…VAVG), 427 to 447 (AYVN…VLGF), and 456 to 476 (IWTG…IVTF).

It belongs to the multi antimicrobial extrusion (MATE) (TC 2.A.66.1) family.

It localises to the membrane. This chain is Protein DETOXIFICATION 36, found in Arabidopsis thaliana (Mouse-ear cress).